A 486-amino-acid chain; its full sequence is Serine/threonine-protein phosphatase 2A 56 kDa regulatory subunit alpha isoform (486 aa).

Serine 2 is modified (N-acetylserine). Residues 22–52 are disordered; that stretch reads DGFTRKSVRKAQRQKRSQGSSQFRSQGSQAE. Over residues 27-37 the composition is skewed to basic residues; the sequence is KSVRKAQRQKR. Residues 38–51 show a composition bias toward low complexity; the sequence is SQGSSQFRSQGSQA. Residues serine 41, serine 42, and serine 49 each carry the phosphoserine modification.

It belongs to the phosphatase 2A regulatory subunit B56 family. PP2A consists of a common heterodimeric core enzyme, composed of a 36 kDa catalytic subunit (subunit C) and a 65 kDa constant regulatory subunit (PR65 or subunit A), that associates with a variety of regulatory subunits. Proteins that associate with the core dimer include three families of regulatory subunits B (the R2/B/PR55/B55, R3/B''/PR72/PR130/PR59 and R5/B'/B56 families), the 48 kDa variable regulatory subunit, viral proteins, and cell signaling molecules. Interacts with SGO1. As to expression, widely expressed with highest levels in thymus and ovary.

It is found in the cytoplasm. It localises to the nucleus. The protein resides in the chromosome. The protein localises to the centromere. Functionally, the B regulatory subunit might modulate substrate selectivity and catalytic activity, and might also direct the localization of the catalytic enzyme to a particular subcellular compartment. The polypeptide is Serine/threonine-protein phosphatase 2A 56 kDa regulatory subunit alpha isoform (Ppp2r5a) (Mus musculus (Mouse)).